The following is a 253-amino-acid chain: Probable transcriptional regulatory protein SynRCC307_1833 (253 aa).

This sequence belongs to the TACO1 family.

It localises to the cytoplasm. The chain is Probable transcriptional regulatory protein SynRCC307_1833 from Synechococcus sp. (strain RCC307).